The following is a 98-amino-acid chain: NADH-ubiquinone oxidoreductase chain 4L (98 aa).

A run of 3 helical transmembrane segments spans residues 1 to 21 (MSMV…GLLM), 29 to 49 (SLLC…MTIL), and 61 to 81 (IILL…LVMV).

The protein belongs to the complex I subunit 4L family. As to quaternary structure, core subunit of respiratory chain NADH dehydrogenase (Complex I) which is composed of 45 different subunits.

It localises to the mitochondrion inner membrane. The enzyme catalyses a ubiquinone + NADH + 5 H(+)(in) = a ubiquinol + NAD(+) + 4 H(+)(out). Core subunit of the mitochondrial membrane respiratory chain NADH dehydrogenase (Complex I) which catalyzes electron transfer from NADH through the respiratory chain, using ubiquinone as an electron acceptor. Part of the enzyme membrane arm which is embedded in the lipid bilayer and involved in proton translocation. The sequence is that of NADH-ubiquinone oxidoreductase chain 4L (MT-ND4L) from Phocarctos hookeri (Hooker's sea lion).